The sequence spans 111 residues: Ribonuclease P protein component (111 aa).

Belongs to the RnpA family. As to quaternary structure, consists of a catalytic RNA component (M1 or rnpB) and a protein subunit.

The enzyme catalyses Endonucleolytic cleavage of RNA, removing 5'-extranucleotides from tRNA precursor.. Its function is as follows. RNaseP catalyzes the removal of the 5'-leader sequence from pre-tRNA to produce the mature 5'-terminus. It can also cleave other RNA substrates such as 4.5S RNA. The protein component plays an auxiliary but essential role in vivo by binding to the 5'-leader sequence and broadening the substrate specificity of the ribozyme. The chain is Ribonuclease P protein component from Borreliella afzelii (strain PKo) (Borrelia afzelii).